Here is a 670-residue protein sequence, read N- to C-terminus: Probable E3 ubiquitin ligase complex SCF subunit sconB (670 aa).

The disordered stretch occupies residues 1–38; sequence MSSPPPFTSIFGGPAESAEEIDADADNSQLKPHNRSNV. Polar residues predominate over residues 27 to 38; it reads NSQLKPHNRSNV. Positions 163 to 209 constitute an F-box domain; that stretch reads IDFIAALPPEISFKILCYLDTTSLCKAAQVSRRWRALADDDVVWHRM. The disordered stretch occupies residues 249–287; that stretch reads VNGTSPKATPALPEDASPVADSSGTGKRKPEPSEEETAV. WD repeat units follow at residues 339 to 376, 379 to 418, 420 to 456, 458 to 499, 553 to 596, 599 to 636, and 639 to 670; these read GHTN…EIRT, GHES…STYT, HRGG…TCLL, GHTD…RTFH, ISQS…CLRT, GHLE…CERT, and GHSG…SFQS.

It belongs to the WD repeat MET30/SCONB/SCON-2 family. As to quaternary structure, component of the SCF(sconB) E3 ubiquitin ligase complex.

It participates in protein modification; protein ubiquitination. Component of the SCF(sconB) E3 ubiquitin ligase complex involved in the regulation of sulfur metabolite repression, probably by mediating the inactivation or degradation of the metR transcription factor. In Aspergillus niger (strain ATCC MYA-4892 / CBS 513.88 / FGSC A1513), this protein is Probable E3 ubiquitin ligase complex SCF subunit sconB (sconB).